Consider the following 150-residue polypeptide: Endoribonuclease YbeY (150 aa).

Zn(2+) contacts are provided by His-112, His-116, and His-122.

This sequence belongs to the endoribonuclease YbeY family. Requires Zn(2+) as cofactor.

Its subcellular location is the cytoplasm. Functionally, single strand-specific metallo-endoribonuclease involved in late-stage 70S ribosome quality control and in maturation of the 3' terminus of the 16S rRNA. This is Endoribonuclease YbeY from Geobacter sulfurreducens (strain ATCC 51573 / DSM 12127 / PCA).